A 67-amino-acid polypeptide reads, in one-letter code: UPF0434 protein Tcr_0959 (67 aa).

The protein belongs to the UPF0434 family.

The sequence is that of UPF0434 protein Tcr_0959 from Hydrogenovibrio crunogenus (strain DSM 25203 / XCL-2) (Thiomicrospira crunogena).